A 181-amino-acid polypeptide reads, in one-letter code: MKASISIDEKKDFIRWFLNKHQMKTREAMWVLNYIAGHDQIVKYVHFVDNLEGCARGLSLSAHGVESEPFLFFKGSIMTTDPEKAFHDIRLNWDEELYVELHFEEAMTSPEYALVREDNPFAAVKLAEEEKEMADALIYQSVHQFSREKLLQQIDEALDTRDEATFHKLVRILQQMDTEKE.

It belongs to the UPF0302 family.

The chain is UPF0302 protein lin2035 from Listeria innocua serovar 6a (strain ATCC BAA-680 / CLIP 11262).